The following is a 3957-amino-acid chain: Ankyrin-2 (3957 aa).

Positions 1-14 are enriched in basic and acidic residues; it reads MMNEDAAQKSDSGE. A disordered region spans residues 1-34; it reads MMNEDAAQKSDSGEKFNGSSQRRKRPKKSDSNAS. ANK repeat units follow at residues 30–62, 63–92, 96–125, 129–158, 162–191, 193–220, 232–261, 265–294, 298–327, 331–360, 364–393, 397–426, 430–459, 463–492, 496–525, 529–558, 562–591, 595–624, 628–657, 661–690, 694–723, 727–756, 760–789, and 793–822; these read DSNA…TCNQ, NGLN…SVDS, KGNT…NINA, NGFT…NQST, DGFT…KGKV, LPAL…NADV, SGFT…AVDF, NGIT…QIDA, DGLT…PLLA, NGLS…PVDD, DYLT…NPNA, NGFT…SIQA, SGLT…SPDV, RGET…LVDA, EEQT…HPDA, NGYT…AHSL, KGFT…AADS, NGLT…SPHA, NGYT…ETNI, QGVT…NIHM, SGLT…DQDA, LGYT…NVNA, NGYT…KPNA, and NGNT…EVTT. Residues Ser31 and Ser34 each carry the phosphoserine modification. The residue at position 378 (Tyr378) is a Phosphotyrosine. Tyr531 is subject to Phosphotyrosine. Ser846 bears the Phosphoserine mark. A Phosphothreonine modification is found at Thr853. Ser874 carries the post-translational modification Phosphoserine. Residues 966 to 1125 are interaction with SPTBN1; that stretch reads SGFLVSFMVD…ELNEILNGMD (160 aa). 2 consecutive ZU5 domains span residues 968–1156 and 1158–1304; these read FLVS…VVSR and KQDS…LIDC. The interval 1289 to 1423 is UPA domain; it reads VSFTTNVSAR…FVKVRDTTQE (135 aa). Tyr1382 carries the post-translational modification Phosphotyrosine. The Death 1 domain occupies 1450–1535; the sequence is ITLPIYTKES…SDKAGSIKVK (86 aa). A disordered region spans residues 1457–1486; it reads KESESDQEQEEEIDMTSEKNDETESTETSV. A phosphoserine mark is found at Ser1459, Ser1461, Ser1473, Ser1500, and Ser1596. Over residues 1461-1471 the composition is skewed to acidic residues; the sequence is SDQEQEEEIDM. 7 disordered regions span residues 1670–2137, 2197–2411, 2430–2484, 2507–2586, 2604–2852, 2864–2904, and 2923–2951; these read AVGR…TDFS, ALDG…GLEL, AVSH…GIFP, SRLL…TPEE, EAKQ…SLPH, DISA…TDRF, and QITS…ANHT. Basic and acidic residues-rich tracts occupy residues 1674–1683 and 1711–1733; these read SSEKEGKDIP and KQKQ…KGSS. A phosphoserine mark is found at Ser1732, Ser1733, and Ser1736. Residues 1766 to 1783 show a composition bias toward basic and acidic residues; that stretch reads IKDKVKALQKRVEDEQKG. Repeat A repeat units follow at residues 1806 to 1817, 1818 to 1829, 1830 to 1841, 1842 to 1853, 1854 to 1865, 1866 to 1877, and 1878 to 1889; these read HPAASPSLKSER, HAPGSPSPKTER, HSTLSSSAKTER, HPPVSPSSKTEK, HSPVSPSAKTER, HSPASSSSKTEK, and HSPVSPSTKTER. The repeat-rich region stretch occupies residues 1806 to 1983; sequence HPAASPSLKS…PVSPTSKTER (178 aa). 2 positions are modified to phosphoserine: Ser1855 and Ser1858. 2 stretches are compositionally biased toward basic and acidic residues: residues 1886-1902 and 1921-1937; these read KTER…ERHP and RTEK…EKRL. The Repeat A; approximate repeat unit spans residues 1890–1900; the sequence is HSPVSSTKTER. Repeat A repeat units follow at residues 1901–1912 and 1913–1924; these read HPPVSPSGKTDK and RPPVSPSGRTEK. The stretch at 1925–1935 is one Repeat A; approximate repeat; that stretch reads HPPVSPGRTEK. Residue Ser1929 is modified to Phosphoserine. Repeat A repeat units follow at residues 1936–1947, 1948–1959, 1960–1971, and 1972–1983; these read RLPVSPSGRTDK, HQPVSTAGKTEK, HLPVSPSGKTEK, and QPPVSPTSKTER. Basic and acidic residues-rich tracts occupy residues 1980-1994, 2003-2034, 2075-2093, and 2102-2117; these read KTER…RELM, PSKH…KEKG, VKKE…HKIP, and EESH…KMAD. Ser2127 is subject to Phosphoserine. Residues 2128–2137 show a composition bias toward basic and acidic residues; that stretch reads PDRKTSTDFS. At Thr2239 the chain carries Phosphothreonine. Residues 2240 to 2251 are compositionally biased toward polar residues; that stretch reads PETSPESLSFSP. At Ser2243 the chain carries Phosphoserine. Residues 2252–2282 show a composition bias toward basic and acidic residues; it reads KKSEEQTGETKESTKTETTTEIRSEKEHPTT. Position 2269 is a phosphothreonine (Thr2269). Ser2275 is subject to Phosphoserine. The span at 2355–2376 shows a compositional bias: polar residues; that stretch reads TFGSSAHKTQTDSEVQESTATS. Phosphoserine is present on residues Ser2405, Ser2440, Ser2454, Ser2516, and Ser2521. Polar residues predominate over residues 2523–2545; that stretch reads EQTSLMESSGKSPLSPDTPSSEE. 2 stretches are compositionally biased toward basic and acidic residues: residues 2576 to 2586 and 2604 to 2619; these read NGEKKRFTPEE and EAKQ…KQEE. Thr2583 carries the post-translational modification Phosphothreonine. Ser2679 and Ser2701 each carry phosphoserine. The span at 2696–2705 shows a compositional bias: low complexity; the sequence is PSSMDSNSSP. Residues 2729-2776 are compositionally biased toward basic and acidic residues; it reads EPGKSEEEKDSESHLAEDRHAVSTEAEDRSYDKLNRDTDQPKICDGHG. A phosphoserine mark is found at Ser2781 and Ser2795. The segment covering 2781-2791 has biased composition (low complexity); sequence SPSSSAAPVSS. The segment covering 2892-2903 has biased composition (polar residues); sequence SQDSSITTQTDR. Phosphoserine is present on Ser2956. 3 disordered regions span residues 2987-3016, 3069-3099, and 3136-3462; these read NFEG…SSFE, LMVD…SEQN, and QESR…PTKE. Residues 2998–3016 are compositionally biased toward polar residues; it reads QQESTLWEMQSDSVSSSFE. Residue Ser3075 is modified to Phosphoserine. Thr3078 is modified (phosphothreonine). Positions 3078 to 3087 are enriched in low complexity; sequence TTPDTTPART. Positions 3090-3099 are enriched in polar residues; that stretch reads EEGTPTSEQN. Residues 3137–3149 are compositionally biased toward basic and acidic residues; the sequence is ESREETLSEDVKE. The span at 3157-3169 shows a compositional bias: low complexity; that stretch reads LPLETSAESLALS. Positions 3175–3194 are enriched in acidic residues; sequence VDDEADLLPDDVSEEVEEIP. Polar residues-rich tracts occupy residues 3198-3212 and 3256-3265; these read AQLN…STET and LDFSTLTRSV. 3 positions are modified to phosphoserine: Ser3273, Ser3276, and Ser3277. The span at 3335–3344 shows a compositional bias: basic and acidic residues; that stretch reads EENKADEAKP. Polar residues predominate over residues 3357–3374; it reads VEQQLSDLDTSVQKTVAP. Phosphoserine occurs at positions 3390 and 3409. Residues 3409–3423 show a composition bias toward basic and acidic residues; that stretch reads SYTETETESRERAEE. Residues 3446–3460 are compositionally biased toward low complexity; it reads SRSTTSSCRGGTSPT. Phosphoserine is present on Ser3474. Positions 3569-3653 constitute a Death 2 domain; the sequence is IEERLAYIAD…DIVHLMETNT (85 aa). Ser3735 bears the Phosphoserine mark. A phosphothreonine mark is found at Thr3776, Thr3797, Thr3803, and Thr3814. Residues 3777 to 3858 are disordered; the sequence is PGTETSETQK…VESADNQPET (82 aa). Ser3823 bears the Phosphoserine mark. Basic and acidic residues predominate over residues 3832–3841; it reads PSEHREESSP. The residue at position 3909 (Ser3909) is a Phosphoserine.

In terms of assembly, interacts with RHBG and SPTBN1. Colocalizes with Na/K ATPase, Na/Ca exchanger and SPTBN1. Directly interacts with DMD; this interaction is necessary for DMD localization at the sarcolemma. Interacts with DCTN4; this interaction is required for DCTN4 retention at costameres. Identified in complexes that contain VIM, EZR, AHNAK, BFSP1, BFSP2, ANK2, PLEC, PRX and spectrin. Interacts (via death domain) with RABGAP1L (via Rab-GAP TBC domain). In terms of processing, phosphorylated at multiple sites by different protein kinases and each phosphorylation event regulates the protein's structure and function. As to expression, present in plasma membrane of neurons as well as glial cells throughout the brain. Expressed in fetal brain and in temporal cortex of adult brain. Also expressed in the inner segments of rod photoreceptors in retina.

It is found in the cytoplasm. The protein resides in the cytoskeleton. Its subcellular location is the membrane. It localises to the myofibril. The protein localises to the sarcomere. It is found in the m line. The protein resides in the apical cell membrane. Its subcellular location is the cell membrane. It localises to the postsynaptic cell membrane. The protein localises to the early endosome. It is found in the recycling endosome. The protein resides in the lysosome. Its subcellular location is the mitochondrion. It localises to the z line. The protein localises to the sarcolemma. It is found in the T-tubule. Functionally, plays an essential role in the localization and membrane stabilization of ion transporters and ion channels in several cell types, including cardiomyocytes, as well as in striated muscle cells. In skeletal muscle, required for proper localization of DMD and DCTN4 and for the formation and/or stability of a special subset of microtubules associated with costameres and neuromuscular junctions. In cardiomyocytes, required for coordinate assembly of Na/Ca exchanger, SLC8A1/NCX1, Na/K ATPases ATP1A1 and ATP1A2 and inositol 1,4,5-trisphosphate (InsP3) receptors at sarcoplasmic reticulum/sarcolemma sites. Required for expression and targeting of SPTBN1 in neonatal cardiomyocytes and for the regulation of neonatal cardiomyocyte contraction rate. In the inner segment of rod photoreceptors, required for the coordinated expression of the Na/K ATPase, Na/Ca exchanger and beta-2-spectrin (SPTBN1). Plays a role in endocytosis and intracellular protein transport. Associates with phosphatidylinositol 3-phosphate (PI3P)-positive organelles and binds dynactin to promote long-range motility of cells. Recruits RABGAP1L to (PI3P)-positive early endosomes, where RABGAP1L inactivates RAB22A, and promotes polarized trafficking to the leading edge of the migrating cells. Part of the ANK2/RABGAP1L complex which is required for the polarized recycling of fibronectin receptor ITGA5 ITGB1 to the plasma membrane that enables continuous directional cell migration. In Homo sapiens (Human), this protein is Ankyrin-2 (ANK2).